Reading from the N-terminus, the 1872-residue chain is E3 ubiquitin-protein ligase UBR2 (1872 aa).

The UBR-type zinc-finger motif lies at 96–172 (TACTRLCFPS…DAFKCKNELN (77 aa)). Lysine 709 participates in a covalent cross-link: Glycyl lysine isopeptide (Lys-Gly) (interchain with G-Cter in ubiquitin). Residues 1134-1240 (RYLMETAPHV…SSNTINSCCD (107 aa)) form an interaction with UBC2 region. The segment at 1203 to 1227 (NNSVDTSDISTPRTTSPSLSPTRIN) is disordered. Low complexity predominate over residues 1212-1225 (STPRTTSPSLSPTR). 2 positions are modified to phosphoserine: serine 1218 and serine 1222. The RING-type; atypical zinc finger occupies 1241-1362 (DDCVFCKMPK…GLIYCPVCNS (122 aa)).

Belongs to the E3 ubiquitin-protein ligase UBR1-like family. As to quaternary structure, interacts with MUB1, RPN4 and UBC2.

It localises to the cytoplasm. It carries out the reaction S-ubiquitinyl-[E2 ubiquitin-conjugating enzyme]-L-cysteine + [acceptor protein]-L-lysine = [E2 ubiquitin-conjugating enzyme]-L-cysteine + N(6)-ubiquitinyl-[acceptor protein]-L-lysine.. Its pathway is protein modification; protein ubiquitination. E3 ubiquitin-protein ligase which probably functions outside the N-end rule pathway, since it lacks the residues essential for the degradation of N-end rule substrates. Mediates RPN4 ubiquitination and subsequent degradation. This is E3 ubiquitin-protein ligase UBR2 (UBR2) from Saccharomyces cerevisiae (strain ATCC 204508 / S288c) (Baker's yeast).